Reading from the N-terminus, the 297-residue chain is Lysenin (297 aa).

Residues 10–33 (EQIEVDVVAVWKEGYVYENRGSTS) are N-terminal cap domain. The beta-hairpin domain stretch occupies residues 34–107 (VDQKITITKG…SKVIEHTITI (74 aa)). The segment at 108-156 (PPTSKFTRWQLNADVGGADIEYMYLIDEVTPIGGTQSIPQVITSRAKII) is N-terminal cap domain. A C-terminal receptor-binding domain region spans residues 157-297 (VGRQIILGKT…EDKWILEVVG (141 aa)). Residues lysine 185, serine 227, tyrosine 233, and tyrosine 282 each contribute to the an N-(acyl)-sphingosylphosphocholine site. Cysteine 272 and cysteine 283 are oxidised to a cystine.

It belongs to the lysenin family. Binds to sphingomyelin as a monomer by using its C-terminal domain. Forms a nonamer when sphingomyelin/lysenin ratio is lower than ca 500. Oligomerization, but not binding, is influenced by the fluidity of sphingomyelin. As to expression, expressed by coelomocytes.

Its subcellular location is the secreted. The protein resides in the target cell membrane. Functionally, pore-forming toxin that defensively acts against parasitic microorganisms by forming pores in sphingomyelin-containing membranes. Has hemolytic activity and is also cytotoxic to spermatozoa of some species of invertebrates and many species of vertebrates and to amphibian larvae, guinea pig polymorphonuclear leukocytes, chicken fibroblasts, normal spleen cells and various tumor cells. Is lethal for various species of reptiles, amphibian, birds and mammals. Induces smooth muscle contraction. It binds sphingomyelin and induces hemolysis in the same manner as lysenin-related protein 2, and is 10-fold more effective than lysenin-related protein 1. The chain is Lysenin from Eisenia fetida (Red wiggler worm).